The primary structure comprises 199 residues: Putative ATP-dependent Clp protease proteolytic subunit-like (199 aa).

It belongs to the peptidase S14 family. In terms of assembly, component of the chloroplastic Clp protease core complex.

Its subcellular location is the plastid. It is found in the cyanelle. Has lost the two conserved residues (Ser and His) proposed to be part of the active site. Therefore it could be inactive. The polypeptide is Putative ATP-dependent Clp protease proteolytic subunit-like (clpP-B) (Cyanophora paradoxa).